Consider the following 293-residue polypeptide: 4-hydroxy-tetrahydrodipicolinate synthase (293 aa).

Threonine 45 serves as a coordination point for pyruvate. The active-site Proton donor/acceptor is the tyrosine 133. Lysine 162 serves as the catalytic Schiff-base intermediate with substrate. Pyruvate is bound at residue isoleucine 204.

It belongs to the DapA family. Homotetramer; dimer of dimers.

The protein resides in the cytoplasm. The enzyme catalyses L-aspartate 4-semialdehyde + pyruvate = (2S,4S)-4-hydroxy-2,3,4,5-tetrahydrodipicolinate + H2O + H(+). It functions in the pathway amino-acid biosynthesis; L-lysine biosynthesis via DAP pathway; (S)-tetrahydrodipicolinate from L-aspartate: step 3/4. In terms of biological role, catalyzes the condensation of (S)-aspartate-beta-semialdehyde [(S)-ASA] and pyruvate to 4-hydroxy-tetrahydrodipicolinate (HTPA). The protein is 4-hydroxy-tetrahydrodipicolinate synthase of Brucella suis biovar 1 (strain 1330).